The chain runs to 607 residues: Synaptotagmin-like protein 3 (607 aa).

The region spanning 4–123 (EVDLESFKEL…IKTGEWFFEE (120 aa)) is the RabBD domain. The interval 221–279 (VGHTERRSQSDTAVNVTSRKASTPDILKAFHQEDPKHPPDPVLKQDTPPSSPTHSAVFS) is disordered. Over residues 230–241 (SDTAVNVTSRKA) the composition is skewed to polar residues. Basic and acidic residues predominate over residues 248–259 (KAFHQEDPKHPP). C2 domains lie at 305–430 (VTGE…ARWY) and 458–590 (LPAG…LQWH).

As to quaternary structure, monomer. Binds NRXN1. Binds RAB27A that has been activated by GTP-binding via its N-terminus. As to expression, highly expressed in spleen and lung. Detected at lower levels in heart and testis.

The protein resides in the endomembrane system. Functionally, may act as Rab effector protein and play a role in vesicle trafficking. Binds phospholipids in the presence of calcium ions. The sequence is that of Synaptotagmin-like protein 3 (Sytl3) from Mus musculus (Mouse).